The primary structure comprises 468 residues: Glutamate--tRNA ligase (468 aa).

A 'HIGH' region motif is present at residues 8-18 (PSPTGDPHVGT). Positions 243-247 (KISKR) match the 'KMSKS' region motif. An ATP-binding site is contributed by Lys246.

This sequence belongs to the class-I aminoacyl-tRNA synthetase family. Glutamate--tRNA ligase type 1 subfamily. In terms of assembly, monomer.

The protein resides in the cytoplasm. It catalyses the reaction tRNA(Glu) + L-glutamate + ATP = L-glutamyl-tRNA(Glu) + AMP + diphosphate. Catalyzes the attachment of glutamate to tRNA(Glu) in a two-step reaction: glutamate is first activated by ATP to form Glu-AMP and then transferred to the acceptor end of tRNA(Glu). This is Glutamate--tRNA ligase from Thermus thermophilus (strain ATCC BAA-163 / DSM 7039 / HB27).